The chain runs to 386 residues: Delta(7)-sterol 5(6)-desaturase ERG3 (386 aa).

A run of 3 helical transmembrane segments spans residues 120–140 (LSLF…VAYL), 172–192 (IPVM…GYSF), and 206–226 (AILW…YFLH). Residues 214–337 (FILFTDCGIY…FTTLWDRLGN (124 aa)) form the Fatty acid hydroxylase domain. The Histidine box-1 motif lies at 226–230 (HRWLH). Positions 239 to 243 (HKPHH) match the Histidine box-2 motif. A helical transmembrane segment spans residues 272-292 (PLLFPLHKVLYLFLFTFVNFW). Residues 314–318 (HTVHH) carry the Histidine box-3 motif.

This sequence belongs to the sterol desaturase family. The cofactor is Fe cation.

Its subcellular location is the endoplasmic reticulum membrane. It catalyses the reaction a Delta(7)-sterol + 2 Fe(II)-[cytochrome b5] + O2 + 2 H(+) = a Delta(5),Delta(7)-sterol + 2 Fe(III)-[cytochrome b5] + 2 H2O. Its pathway is steroid metabolism; ergosterol biosynthesis; ergosterol from zymosterol: step 3/5. In terms of biological role, C-5 sterol desaturase; part of the third module of ergosterol biosynthesis pathway that includes the late steps of the pathwa. ERG3 catalyzes the introduction of a C-5 double bond in the B ring to produce 5-dehydroepisterol. The third module or late pathway involves the ergosterol synthesis itself through consecutive reactions that mainly occur in the endoplasmic reticulum (ER) membrane. Firstly, the squalene synthase ERG9 catalyzes the condensation of 2 farnesyl pyrophosphate moieties to form squalene, which is the precursor of all steroids. Squalene synthase is crucial for balancing the incorporation of farnesyl diphosphate (FPP) into sterol and nonsterol isoprene synthesis. Secondly, the squalene epoxidase ERG1 catalyzes the stereospecific oxidation of squalene to (S)-2,3-epoxysqualene, which is considered to be a rate-limiting enzyme in steroid biosynthesis. Then, the lanosterol synthase ERG7 catalyzes the cyclization of (S)-2,3 oxidosqualene to lanosterol, a reaction that forms the sterol core. In the next steps, lanosterol is transformed to zymosterol through a complex process involving various demethylation, reduction and desaturation reactions. The lanosterol 14-alpha-demethylase ERG11 (also known as CYP51) catalyzes C14-demethylation of lanosterol to produce 4,4'-dimethyl cholesta-8,14,24-triene-3-beta-ol, which is critical for ergosterol biosynthesis. The C-14 reductase ERG24 reduces the C14=C15 double bond of 4,4-dimethyl-cholesta-8,14,24-trienol to produce 4,4-dimethyl-cholesta-8,24-dienol. 4,4-dimethyl-cholesta-8,24-dienol is substrate of the C-4 demethylation complex ERG25-ERG26-ERG27 in which ERG25 catalyzes the three-step monooxygenation required for the demethylation of 4,4-dimethyl and 4alpha-methylsterols, ERG26 catalyzes the oxidative decarboxylation that results in a reduction of the 3-beta-hydroxy group at the C-3 carbon to an oxo group, and ERG27 is responsible for the reduction of the keto group on the C-3. ERG28 has a role as a scaffold to help anchor ERG25, ERG26 and ERG27 to the endoplasmic reticulum and ERG29 regulates the activity of the iron-containing C4-methylsterol oxidase ERG25. Then, the sterol 24-C-methyltransferase ERG6 catalyzes the methyl transfer from S-adenosyl-methionine to the C-24 of zymosterol to form fecosterol. The C-8 sterol isomerase ERG2 catalyzes the reaction which results in unsaturation at C-7 in the B ring of sterols and thus converts fecosterol to episterol. The sterol-C5-desaturase ERG3 then catalyzes the introduction of a C-5 double bond in the B ring to produce 5-dehydroepisterol. The C-22 sterol desaturase ERG5 further converts 5-dehydroepisterol into ergosta-5,7,22,24(28)-tetraen-3beta-ol by forming the C-22(23) double bond in the sterol side chain. Finally, ergosta-5,7,22,24(28)-tetraen-3beta-ol is substrate of the C-24(28) sterol reductase ERG4 to produce ergosterol. The chain is Delta(7)-sterol 5(6)-desaturase ERG3 from Candida albicans (strain SC5314 / ATCC MYA-2876) (Yeast).